Reading from the N-terminus, the 243-residue chain is Uba3-binding protein but1 (243 aa).

Residues 28–50 (KSTKKRRSSTKDEETRGMHPHIK) form a disordered region.

Homodimer. Interacts with but2 and uba3.

It localises to the nucleus. Its function is as follows. Acts as a negative regulator of the NEDD8 pathway. Has a role in meiosis. In Schizosaccharomyces pombe (strain 972 / ATCC 24843) (Fission yeast), this protein is Uba3-binding protein but1 (but1).